The primary structure comprises 1257 residues: Receptor tyrosine-protein kinase erbB-2 (1257 aa).

Positions 1–22 (MELAAWCRWGFLLALLPPGIAG) are cleaved as a signal peptide. Residues 23–654 (TQVCTGTDMK…PAEQRASPVT (632 aa)) lie on the Extracellular side of the membrane. C26 and C53 form a disulfide bridge. Residues N68 and N188 are each glycosylated (N-linked (GlcNAc...) asparagine). Cystine bridges form between C163–C193, C196–C205, C200–C213, C221–C228, C225–C236, C237–C245, C241–C253, C256–C265, C269–C296, C300–C312, C316–C332, C335–C339, C343–C368, C476–C506, C513–C522, and C517–C530. A glycan (N-linked (GlcNAc...) asparagine) is linked at N260. The N-linked (GlcNAc...) asparagine glycan is linked to N532. Disulfide bonds link C533/C542, C546/C562, C565/C578, C569/C586, C589/C598, C602/C625, C628/C636, and C632/C644. N-linked (GlcNAc...) asparagine glycosylation is present at N573. N631 carries an N-linked (GlcNAc...) asparagine glycan. A helical membrane pass occupies residues 655-677 (FIIATVVGVLLFLILVVVVGILI). The tract at residues 678–691 (KRRRQKIRKYTMRR) is required for interaction with KPNB1 and EEA1. The Nuclear localization signal signature appears at 678-691 (KRRRQKIRKYTMRR). Residues 678–1257 (KRRRQKIRKY…PEYLGLDVPV (580 aa)) are Cytoplasmic-facing. Residues 722–989 (LRKVKVLGSG…RMARDPQRFV (268 aa)) enclose the Protein kinase domain. Residues 728–736 (LGSGAFGTV) and K755 contribute to the ATP site. D847 acts as the Proton acceptor in catalysis. Y879 is modified (phosphotyrosine). The disordered stretch occupies residues 1029-1181 (QQGFFSPDPT…PKTLSPGKNG (153 aa)). A phosphoserine mark is found at S1056, S1080, S1085, and S1109. The residue at position 1114 (Y1114) is a Phosphotyrosine. Phosphotyrosine; by autocatalysis is present on Y1141. Pro residues predominate over residues 1149-1163 (PQPPLTPEGPLPPVR). The residue at position 1168 (T1168) is a Phosphothreonine. Residues 1197–1199 (EYL) form an interaction with PIK3C2B region. The residue at position 1198 (Y1198) is a Phosphotyrosine. The segment at 1200-1257 (VPREGTASPPHPSPAFSPAFDNLYYWDQNSSEQGPPPSNFEGTPTAENPEYLGLDVPV) is disordered. Phosphotyrosine; by autocatalysis is present on Y1250.

This sequence belongs to the protein kinase superfamily. Tyr protein kinase family. EGF receptor subfamily. As to quaternary structure, homodimer. Heterodimer with EGFR, ERBB3 and ERBB4. Part of a complex with EGFR and either PIK3C2A or PIK3C2B. May interact with PIK3C2B when phosphorylated on Tyr-1198. Interacts with PRKCABP and PLXNB1. Interacts (when phosphorylated on Tyr-1250) with MEMO1. Interacts with MUC1. Interacts (when phosphorylated on Tyr-1141) with GRB7 (via SH2 domain). Interacts (when phosphorylated on Tyr-1250) with ERBIN Interacts with SRC, KPNB1, RANBP2, EEA1, CRM1, CLTC, PTK6, RPA194, MYOC and ACTB. Interacts with HSP90AA1 and HSP90AB1; the interaction suppresses ERBB2 kinase activity. Interacts with SORL1; this interaction regulates ERBB2 subcellular distribution by promoting its recycling after internalization from endosomes back to the plasma membrane, hence stimulates ERBB2-mediated signaling. Interacts with SH3BGRL. Interacts with ROR1. In terms of processing, autophosphorylated. Autophosphorylation occurs in trans, i.e. one subunit of the dimeric receptor phosphorylates tyrosine residues on the other subunit. Ligand-binding increases phosphorylation on tyrosine residues. Signaling via SEMA4C promotes phosphorylation at Tyr-1250. Dephosphorylated by PTPN12.

It is found in the cell membrane. It localises to the cell projection. The protein resides in the ruffle membrane. Its subcellular location is the early endosome. The protein localises to the cytoplasm. It is found in the perinuclear region. It localises to the nucleus. The catalysed reaction is L-tyrosyl-[protein] + ATP = O-phospho-L-tyrosyl-[protein] + ADP + H(+). Protein tyrosine kinase that is part of several cell surface receptor complexes, but that apparently needs a coreceptor for ligand binding. Essential component of a neuregulin-receptor complex, although neuregulins do not interact with it alone. GP30 is a potential ligand for this receptor. Regulates outgrowth and stabilization of peripheral microtubules (MTs). Upon ERBB2 activation, the MEMO1-RHOA-DIAPH1 signaling pathway elicits the phosphorylation and thus the inhibition of GSK3B at cell membrane. This prevents the phosphorylation of APC and CLASP2, allowing its association with the cell membrane. In turn, membrane-bound APC allows the localization of MACF1 to the cell membrane, which is required for microtubule capture and stabilization. Interacts (preferentially with the tyrosine phosphorylated form) with CPNE3; this interaction occurs at the cell membrane and is increased in a growth factor heregulin-dependent manner. In terms of biological role, in the nucleus is involved in transcriptional regulation. Associates with the 5'-TCAAATTC-3' sequence in the PTGS2/COX-2 promoter and activates its transcription. Implicated in transcriptional activation of CDKN1A; the function involves STAT3 and SRC. Involved in the transcription of rRNA genes by RNA Pol I and enhances protein synthesis and cell growth. This Rattus norvegicus (Rat) protein is Receptor tyrosine-protein kinase erbB-2 (Erbb2).